The following is a 147-amino-acid chain: MEKKFYLVREDILPEAMKKVVLAKQLLERKKAASVAEAAQLANISRGVFYKYRDAIFPFQAVTKENIVTLFFHLEDRSGTLSQLLSVVAAAGCNVLTIHQTIPLQGRANVTLSVSTNDMHEDIDELLAKLRGLEFVEKVEIVGSGVY.

In terms of domain architecture, ACT spans 69-144 (TLFFHLEDRS…FVEKVEIVGS (76 aa)).

This sequence belongs to the UPF0735 family.

The polypeptide is UPF0735 ACT domain-containing protein GTNG_2535 (Geobacillus thermodenitrificans (strain NG80-2)).